A 125-amino-acid polypeptide reads, in one-letter code: MQCIRCPAILALLALVLCGPSVSSQLDREQSDNQDLDLELRQHWLLERARSAGLLSQEWSKRAVEELLAQMSLPEADVQREAEDASMATGGRMNLERSVDSTNNLPPRERKAGCKNFYWKGFTSC.

Residues 1–24 (MQCIRCPAILALLALVLCGPSVSS) form the signal peptide. Q25 is modified (pyrrolidone carboxylic acid). Residues 25-97 (QLDREQSDNQ…ATGGRMNLER (73 aa)) constitute a propeptide that is removed on maturation. The interval 82–107 (AEDASMATGGRMNLERSVDSTNNLPP) is disordered. A disulfide bond links C114 and C125. K120 is subject to 5-hydroxylysine.

Belongs to the somatostatin family.

The protein resides in the secreted. Somatostatin inhibits the release of somatotropin. The polypeptide is Somatostatin-2 (sst2) (Lophius americanus (American angler)).